The following is a 65-amino-acid chain: MPKLKTHSASKKRFRVTATGKIKRGQAWRNHRLISKSRKAKKHHRLGAYVSAAQEATIKKLIPYK.

This sequence belongs to the bacterial ribosomal protein bL35 family.

This Ruminiclostridium cellulolyticum (strain ATCC 35319 / DSM 5812 / JCM 6584 / H10) (Clostridium cellulolyticum) protein is Large ribosomal subunit protein bL35.